A 163-amino-acid chain; its full sequence is Probable histone H2A.4 (163 aa).

Disordered regions lie at residues 1 to 30 (MEVG…VSRS) and 134 to 163 (SAAA…AAAA). Residues 12–21 (GAGGRRGGGG) show a composition bias toward gly residues. Residues 147-163 (KSPKKATTKSPKKAAAA) are compositionally biased toward basic residues. 2 consecutive short sequence motifs (SPKK motif) follow at residues 148–151 (SPKK) and 156–159 (SPKK).

It belongs to the histone H2A family. As to quaternary structure, the nucleosome is a histone octamer containing two molecules each of H2A, H2B, H3 and H4 assembled in one H3-H4 heterotetramer and two H2A-H2B heterodimers. The octamer wraps approximately 147 bp of DNA.

It localises to the nucleus. The protein resides in the chromosome. Functionally, core component of nucleosome. Nucleosomes wrap and compact DNA into chromatin, limiting DNA accessibility to the cellular machineries which require DNA as a template. Histones thereby play a central role in transcription regulation, DNA repair, DNA replication and chromosomal stability. DNA accessibility is regulated via a complex set of post-translational modifications of histones, also called histone code, and nucleosome remodeling. This chain is Probable histone H2A.4, found in Oryza sativa subsp. indica (Rice).